A 31-amino-acid chain; its full sequence is Cycloviolin-A (31 aa).

The cyclopeptide (Gly-Asn) cross-link spans G1 to N31. 3 cysteine pairs are disulfide-bonded: C5–C21, C9–C23, and C14–C28.

Post-translationally, this is a cyclic peptide.

Its function is as follows. Probably participates in a plant defense mechanism. Has anti-HIV activity. This is Cycloviolin-A from Leonia cymosa (Sacha uba).